The primary structure comprises 426 residues: MTQMTDAKSGITTEEMKFVAKEEGMDVETLKNLIAKGYVVIPKNVNRNTKPVGIGDNLRTKVNVNLGTSPDFIDIACELKKVEISNKYGADAIMDLSTGGNLPEIRKEIIKNTNLPIGTVPIYEVGVDAKEKYGRVIDMDEDLIFNVIERQAKEGVDFMTLHCGITKQTVSALNNDPRKMGVVSRGGAFLTAYIMYHDKENPLYKEFDYLLELLKEHDVTLSLGDGMRPGCLQDNTDRAQIQELITLGELVDKCREKGVQVMVEGPGHVPYNNIEANMKIQKTLCKNAPFYVLGPIVTDLAPGYDHITAAIGGTLAAVSGANFLCYVTPAEHVRLMKEDDVKEGLIASKIAAQAADVAKGHPVAWKLEKEMADARIKHDWERQFEIALDSNKPRKMREEIPSKDEKACSVCGDYCALLMVEELGKR.

Substrate-binding positions include Asn-65, Met-94, Tyr-123, His-162, 184–186 (SRG), 225–228 (DGMR), and Glu-264. Position 268 (His-268) interacts with Zn(2+). Tyr-291 serves as a coordination point for substrate. Residue His-332 coordinates Zn(2+). [4Fe-4S] cluster-binding residues include Cys-408, Cys-411, and Cys-415.

It belongs to the ThiC family. Requires [4Fe-4S] cluster as cofactor.

It catalyses the reaction 5-amino-1-(5-phospho-beta-D-ribosyl)imidazole + S-adenosyl-L-methionine = 4-amino-2-methyl-5-(phosphooxymethyl)pyrimidine + CO + 5'-deoxyadenosine + formate + L-methionine + 3 H(+). Its pathway is cofactor biosynthesis; thiamine diphosphate biosynthesis. Catalyzes the synthesis of the hydroxymethylpyrimidine phosphate (HMP-P) moiety of thiamine from aminoimidazole ribotide (AIR) in a radical S-adenosyl-L-methionine (SAM)-dependent reaction. The chain is Phosphomethylpyrimidine synthase from Methanococcus maripaludis (strain DSM 14266 / JCM 13030 / NBRC 101832 / S2 / LL).